Reading from the N-terminus, the 495-residue chain is Cyclic GMP-AMP synthase (495 aa).

Residues 1 to 128 are disordered; it reads MAARRGKSTR…AGATELAAPA (128 aa). The interval 1–134 is DNA-binding; sequence MAARRGKSTR…AAPARMEAPP (134 aa). K7 carries the post-translational modification N6-acetyllysine. At S13 the chain carries Phosphoserine. 2 stretches are compositionally biased toward basic and acidic residues: residues 52–76 and 105–116; these read CRREKSGPDPREKPQVRTRTARAED and RAREARSARELR. Residue K56 is modified to N6-acetyllysine. A Phosphoserine modification is found at S57. Positions 57 to 68 are required for association with the cell membrane; that stretch reads SGPDPREKPQVR. Positions 103 to 134 are required for activation upon DNA viral infection; that stretch reads SCRAREARSARELRPQAGATELAAPARMEAPP. The short motif at 143–148 is the Nuclear export signal element; the sequence is LEKVRL. K145 bears the N6-lactoyllysine mark. The interval 147 to 190 is DNA-binding; it reads RLSRHEISEAAEVVNWVVEHLLRRLQGGESEFKGVALLRTGSYY. Position 165 is a polyADP-ribosyl glutamic acid (E165). A GTP-binding site is contributed by T186. At S188 the chain carries Phosphoserine. ATP is bound at residue S188. The residue at position 190 (Y190) is a Phosphotyrosine. The Mg(2+) site is built by E200 and D202. D202 serves as a coordination point for 2',3'-cGAMP. A Glycyl lysine isopeptide (Lys-Gly) (interchain with G-Cter in SUMO) cross-link involves residue K206. Residue K260 forms a Glycyl lysine isopeptide (Lys-Gly) (interchain with G-Cter in ubiquitin) linkage. 5-glutamyl polyglutamate is present on E261. Positions 268-278 match the Nuclear localization signal motif; the sequence is GVTVERKRRGS. At S278 the chain carries Phosphoserine. GTP is bound at residue D294. D294 is a binding site for Mg(2+). D294 contacts 2',3'-cGAMP. Residues 316–357 are interaction with collided ribosomes; that stretch reads SQWLGAKVKNNLKRQPFYLVPKHAKEGSGFQEETWRLSFSHI. K322 participates in a covalent cross-link: Glycyl lysine isopeptide (Lys-Gly) (interchain with G-Cter in SUMO); alternate. K322 is covalently cross-linked (Glycyl lysine isopeptide (Lys-Gly) (interchain with G-Cter in ubiquitin); alternate). 2 residues coordinate 2',3'-cGAMP: K337 and R351. 351–358 contacts GTP; it reads RLSFSHIE. An ATP-binding site is contributed by E358. Residue K359 is modified to N6-acetyllysine. A Glycyl lysine isopeptide (Lys-Gly) (interchain with G-Cter in SUMO); alternate cross-link involves residue K359. A Glycyl lysine isopeptide (Lys-Gly) (interchain with G-Cter in ubiquitin); alternate cross-link involves residue K359. The segment at 359–382 is DNA-binding; it reads KDILKNHGQSKTCCEIDGVKCCRK. A Zn(2+)-binding site is contributed by H365. K369 carries the N6-acetyllysine modification. Residue K369 forms a Glycyl lysine isopeptide (Lys-Gly) (interchain with G-Cter in SUMO) linkage. Positions 371, 372, and 379 each coordinate Zn(2+). S-palmitoyl cysteine attachment occurs at residues C379 and C380. Residues K386, K389, K396, and K397 each participate in a glycyl lysine isopeptide (Lys-Gly) (interchain with G-Cter in ubiquitin) cross-link. N6-acetyllysine is present on K389. K389 contacts ATP. Residue S410 is modified to Phosphoserine. ATP is bound at residue 410–414; that stretch reads SYHVK. Residue C449 is the site of S-palmitoyl cysteine attachment. N6-methyllysine is present on K481.

The protein belongs to the mab-21 family. Monomer in the absence of DNA. Homodimer in presence of dsDNA: forms a 2:2 dimer with two enzymes binding to two DNA molecules. Interacts with nucleosomes; interaction is mainly mediated via histones H2A and H2B and inactivates the nucleotidyltransferase activity by blocking DNA-binding and subsequent activation. Interacts with PQBP1 (via WW domain). Interacts with TRIM14; this interaction recruits USP14, leading to deubiquitinate and stabilize CGAS and promote type I interferon production. Interacts with ZCCHC3; promoting sensing of dsDNA by CGAS. Interacts (when not monomethylated) with (poly-ADP-ribosylated) PARP1; interaction takes place in the nucleus and prevents the formation of the PARP1-TIMELESS complex. Interacts (when monomethylated) with SGF29; interaction with SGF29 prevents interaction with PARP1. Interacts with PCBP2; preventing the formation of liquid-like droplets in which CGAS is activated. Interacts with IRGM; promoting CGAS degradation. It depends on Mg(2+) as a cofactor. The cofactor is Mn(2+). Zn(2+) serves as cofactor. The N-terminal disordered part (1-134) is phosphorylated by AURKB during the G2-M transition, blocking CGAS liquid phase separation and preventing activation. Phosphorylation at Tyr-190 by BLK promotes cytosolic retention. Localizes into the nucleus following dephosphorylation at Tyr-190. Phosphorylation at Ser-410 activates the nucleotidyltransferase activity. Dephosphorylation at Ser-410 by PPP6C impairs its ability to bind GTP, thereby inactivating it. Phosphorylation at Ser-188 by PRKDC inhibits its cyclic GMP-AMP synthase activity by impairing homodimerization and activation. Phosphorylation at Ser-278 by AKT (AKT1, AKT2 or AKT3) suppresses the nucleotidyltransferase activity. Phosphorylation at Ser-278 by CDK1 during mitosis leads to its inhibition, thereby preventing CGAS activation by self-DNA during mitosis. Dephosphorylated at Ser-278 by protein phosphatase PP1 upon mitotic exit. In terms of processing, ubiquitinated at Lys-389 via 'Lys-48'-linked polyubiquitin chains, leading to its SQSTM1-mediated autophagic degradation. Interaction with TRIM14 promotes recruitment of USP14, leading to deubiquitinate Lys-389 and stabilize CGAS. Ubiquitinated at Lys-359 by RNF185 via 'Lys-27'-linked polyubiquitination, promoting CGAS cyclic GMP-AMP synthase activity. Monoubiquitination at Lys-322 by TRIM56 promotes oligomerization and subsequent activation. Monoubiquitination by TRIM41 promotes CGAS activation. Ubiquitination at Lys-260 via 'Lys-48'-linked polyubiquitination promotes its degradation. Deubiquitination at Lys-260 by USP29 promotes its stabilization. Deubiquitinated by USP27X, promoting its stabilization. Ubiquitinated at Lys-386 via 'Lys-63'-linked polyubiquitin chains by MARCHF8, leading to the inhibition of its DNA binding ability. In cycling cells, nucleosome-bound CGAS is ubiquitinated at Lys-396 and Lys-397 via 'Lys-48'-linked polyubiquitin chains by the ECS(SPSB3) complex, leading to its degradation: ubiquitination and degradation of nuclear CGAS during G1 and G2 phases is required to promote low intranuclear CGAS abundance before the next mitotic cycle. Post-translationally, sumoylated at Lys-206 by TRIM38 in uninfected cells and during the early phase of viral infection, promoting its stability by preventing ubiquitination at Lys-260 and subsequent degradation. Desumoylated by SENP2 during the late phase of viral infection. Sumoylation at Lys-322, Lys-359 and Lys-369 prevents DNA-binding, oligomerization and nucleotidyltransferase activity. Desumoylation at Lys-322, Lys-359 and Lys-369 by SENP7 relieves inhibition and activates CGAS. Polyglutamylated by TTLL6 at Glu-261, leading to impair DNA-binding activity. Deglutamylated by AGBL5/CCP5 and AGBL6/CCP6. In terms of processing, acetylation at Lys-359, Lys-369 and Lys-389 inhibits the cyclic GMP-AMP synthase activity. Deacetylated upon cytosolic DNA challenge such as viral infections. Acetylation by KAT5 increases the cyclic GMP-AMP synthase activity by promoting DNA-binding and subsequent activation. Post-translationally, proteolytically cleaved by apoptotic caspases during apoptosis, leading to its inactivation. The damage of the nucleus and the mitochondria during apoptosis leads to leakage of nuclear and mitochondrial DNA, which activate CGAS: cleavage and inactivation during apoptosis in required to prevent cytokine overproduction. Cleaved by CASP7 and CASP3 during virus-induced apoptosis, thereby inactivating it and preventing cytokine overproduction. Cleaved by CASP1 upon DNA virus infection; the cleavage impairs cGAMP production. Also cleaved by the pyroptotic CASP4 during non-canonical inflammasome activation; does not cut at the same sites than CASP1. Degraded via selective autophagy following interaction with IRGM. IRGM promotes CGAS recruitment to autophagosome membranes, promoting its SQSTM1/p62-dependent autophagic degradation. In terms of processing, poly-ADP-ribosylation at Glu-165 by PARP1 impairs DNA-binding, thereby preventing the cyclic GMP-AMP synthase activity. Post-translationally, palmitoylation at Cys-449 by ZDHHC18 impairs DNA-binding, thereby preventing the cyclic GMP-AMP synthase activity. Palmitoylation at Cys-379 and Cys-380 by ZDHHC9 promotes homodimerization and cyclic GMP-AMP synthase activity. Depalmitoylation at Cys-379 and Cys-380 by LYPLAL1 impairs homodimerization and cyclic GMP-AMP synthase activity. Monomethylated at Lys-481 by SETD7. Monomethylation promotes interaction with SGF29, preventing interaction between PARP1 nad SGF29. Demethylation by RIOX1 promotes interaction with PARP1, followed by PARP1 inactivation. In terms of processing, lactylation by AARS2 prevents ability to undergo liquid-liquid phase separation (LLPS), thereby inhibiting CGAS activation.

The protein resides in the nucleus. It localises to the chromosome. The protein localises to the cell membrane. Its subcellular location is the cytoplasm. It is found in the cytosol. The catalysed reaction is GTP + ATP = 2',3'-cGAMP + 2 diphosphate. The enzyme catalyses GTP + ATP = pppGp(2'-5')A + diphosphate. It catalyses the reaction pppGp(2'-5')A = 2',3'-cGAMP + diphosphate. With respect to regulation, the enzyme activity is strongly increased by double-stranded DNA (dsDNA), but not by single-stranded DNA or RNA. DNA-binding induces the formation of liquid-like droplets in which CGAS is activated. Liquid-like droplets also create a selective environment that restricts entry of negative regulators, such as TREX1 or BANF1/BAF, allowing sensing of DNA. A number of mechanisms exist to restrict its activity toward self-DNA. The nucleotidyltransferase activity is inhibited in the nucleus via its association with nucleosomes: interacts with the acidic patch of histones H2A and H2B, thereby blocking DNA-binding and subsequent activation. CGAS is also inactive when associated with mitotic chromatin. Chromatin-bound CGAS cannot be activated by exogenous DNA in mitotic cells: phosphorylation of the N-terminal disordered part by AURKB during the G2-M transition blocks CGAS liquid phase separation and activation. Activity toward self-DNA is inhibited by BANF1/BAF upon acute loss of nuclear membrane integrity: BANF1/BAF acts by outcompeting CGAS for DNA-binding, thereby preventing CGAS activation. DNA-induced activation at micronuclei is also limited by TREX1, which degrades micronuclear DNA upon nuclear envelope rupture, thereby preventing CGAS activation. CGAS can be released from nucleosomes and activated by MRE11 component of the MRN complex, which displaces CGAS from acidic-patch-mediated sequestration. Acetylation at Lys-359, Lys-369 and Lys-389 inhibits the cyclic GMP-AMP synthase activity. Acetylation by KAT5 increases the cyclic GMP-AMP synthase activity by promoting DNA-binding and subsequent activation. Phosphorylation at Ser-278 suppresses the nucleotidyltransferase activity. Phosphorylation at Ser-410 promotes the cyclic GMP-AMP synthase activity. Phosphorylation at Ser-188 inhibits its cyclic GMP-AMP synthase activity. Ubiquitination at Lys-359 via 'Lys-27'-linked polyubiquitination enhances the cyclic GMP-AMP synthase activity. Monoubiquitination at Lys-322 promotes oligomerization and subsequent activation. Sumoylation at Lys-322, Lys-359 and Lys-369 prevents DNA-binding, oligomerization and nucleotidyltransferase activity. The enzyme activity is impaired by the cleavage by CASP1. In addition to DNA, also activated by collided ribosomes upon translation stress: specifically binds collided ribosomes, promoting its activation and triggering type-I interferon production. Its function is as follows. Nucleotidyltransferase that catalyzes the formation of cyclic GMP-AMP (2',3'-cGAMP) from ATP and GTP and plays a key role in innate immunity. Catalysis involves both the formation of a 2',5' phosphodiester linkage at the GpA step and the formation of a 3',5' phosphodiester linkage at the ApG step, producing c[G(2',5')pA(3',5')p]. Acts as a key DNA sensor: directly binds double-stranded DNA (dsDNA), inducing the formation of liquid-like droplets in which CGAS is activated, leading to synthesis of 2',3'-cGAMP, a second messenger that binds to and activates STING1, thereby triggering type-I interferon production. Preferentially binds long dsDNA (around 45 bp) and forms ladder-like networks that function cooperatively to stabilize individual cGAS-dsDNA complexes. Acts as a key foreign DNA sensor, the presence of double-stranded DNA (dsDNA) in the cytoplasm being a danger signal that triggers the immune responses. Has antiviral activity by sensing the presence of dsDNA from DNA viruses in the cytoplasm. Also acts as an innate immune sensor of infection by retroviruses by detecting the presence of reverse-transcribed DNA in the cytosol. Detection of retroviral reverse-transcribed DNA in the cytosol may be indirect and be mediated via interaction with PQBP1, which directly binds reverse-transcribed retroviral DNA. Also detects the presence of DNA from bacteria. 2',3'-cGAMP can be transferred from producing cells to neighboring cells through gap junctions, leading to promote STING1 activation and convey immune response to connecting cells. 2',3'-cGAMP can also be transferred between cells by virtue of packaging within viral particles contributing to IFN-induction in newly infected cells in a cGAS-independent but STING1-dependent manner. Also senses the presence of neutrophil extracellular traps (NETs) that are translocated to the cytosol following phagocytosis, leading to synthesis of 2',3'-cGAMP. In addition to foreign DNA, can also be activated by endogenous nuclear or mitochondrial DNA. When self-DNA leaks into the cytosol during cellular stress (such as mitochondrial stress, DNA damage, mitotic arrest or senescence), or is present in form of cytosolic micronuclei, CGAS is activated leading to a state of sterile inflammation. Acts as a regulator of cellular senescence by binding to cytosolic chromatin fragments that are present in senescent cells, leading to trigger type-I interferon production via STING1 and promote cellular senescence. Also involved in the inflammatory response to genome instability and double-stranded DNA breaks: acts by localizing to micronuclei arising from genome instability. Micronuclei, which are frequently found in cancer cells, consist of chromatin surrounded by their own nuclear membrane: following breakdown of the micronuclear envelope, a process associated with chromothripsis, CGAS binds self-DNA exposed to the cytosol, leading to 2',3'-cGAMP synthesis and subsequent activation of STING1 and type-I interferon production. In a healthy cell, CGAS is however kept inactive even in cellular events that directly expose it to self-DNA, such as mitosis, when cGAS associates with chromatin directly after nuclear envelope breakdown or remains in the form of postmitotic persistent nuclear cGAS pools bound to chromatin. Nuclear CGAS is inactivated by chromatin via direct interaction with nucleosomes, which block CGAS from DNA binding and thus prevent CGAS-induced autoimmunity. Also acts as a suppressor of DNA repair in response to DNA damage: inhibits homologous recombination repair by interacting with PARP1, the CGAS-PARP1 interaction leading to impede the formation of the PARP1-TIMELESS complex. In addition to DNA, also sense translation stress: in response to translation stress, translocates to the cytosol and associates with collided ribosomes, promoting its activation and triggering type-I interferon production. The chain is Cyclic GMP-AMP synthase from Sus scrofa (Pig).